Reading from the N-terminus, the 582-residue chain is 15-cis-phytoene desaturase, chloroplastic/chromoplastic (582 aa).

The N-terminal 93 residues, 1 to 93 (MNLLGSISTG…ELENTINFLE (93 aa)), are a transit peptide targeting the chloroplast and chromoplast. FAD-binding positions include A121, 140–141 (EA), K148, 165–166 (HI), and Y171. R306 provides a ligand contact to substrate. D537 contributes to the FAD binding site. A545 contributes to the substrate binding site. M547 lines the FAD pocket.

The protein belongs to the carotenoid/retinoid oxidoreductase family. Homotetramer. Requires FAD as cofactor. Expressed in flower buds and lips. Lower expression in leaves and roots.

Its subcellular location is the plastid. The protein resides in the chloroplast. It is found in the chromoplast. The protein localises to the membrane. It catalyses the reaction 2 a plastoquinone + 15-cis-phytoene = 9,9',15-tri-cis-zeta-carotene + 2 a plastoquinol. It functions in the pathway carotenoid biosynthesis; lycopene biosynthesis. In terms of biological role, converts phytoene into zeta-carotene via the intermediary of phytofluene by the symmetrical introduction of two double bonds at the C-11 and C-11' positions of phytoene with a concomitant isomerization of two neighboring double bonds at the C9 and C9' positions from trans to cis. The sequence is that of 15-cis-phytoene desaturase, chloroplastic/chromoplastic (PDS) from Oncidium hybrid cultivar (Orchid).